A 379-amino-acid polypeptide reads, in one-letter code: MSQNASVGIVTPQKIPFEMPLVLENGKTLPRFDLMIETYGELNAEKNNAVLICHALSGNHHVAGRHSAEDKYTGWWDNMVGPGKPIDTERFFVVGLNNLGGCDGSSGPLSINPETGREYGADFPVVTVKDWVKSQAALTDYLGIGQWAAVVGGSLGGMQALQWTISYPERVRHALVIASAPKLSTQNIAFNDVARQAILTDPDFNEGHYRSRNTVPARGLRIARMMGHITYLAEDGLGKKFGRDLRSNGYQYGYGVEFEVESYLRYQGDKFVGRFDANTYLLMTKALDYFDPAADFGNSLTRAVQDVQAKFFVASFSTDWRFAPERSHELVKALIAAQKSVQYIEVKSAHGHDAFLMEDEAYMRAVAAYMNNVYKECQQ.

One can recognise an AB hydrolase-1 domain in the interval 48–357 (NAVLICHALS…SAHGHDAFLM (310 aa)). S154 serves as the catalytic Nucleophile. R224 is a binding site for substrate. Active-site residues include D319 and H352. Residue D353 coordinates substrate.

The protein belongs to the AB hydrolase superfamily. MetX family. Homodimer.

The protein localises to the cytoplasm. It carries out the reaction L-homoserine + succinyl-CoA = O-succinyl-L-homoserine + CoA. The protein operates within amino-acid biosynthesis; L-methionine biosynthesis via de novo pathway; O-succinyl-L-homoserine from L-homoserine: step 1/1. In terms of biological role, transfers a succinyl group from succinyl-CoA to L-homoserine, forming succinyl-L-homoserine. The polypeptide is Homoserine O-succinyltransferase (Neisseria meningitidis serogroup A / serotype 4A (strain DSM 15465 / Z2491)).